A 1181-amino-acid chain; its full sequence is Putative type II restriction enzyme and methyltransferase RM.MjaORFECS2P (1181 aa).

It in the C-terminal section; belongs to the N(4)/N(6)-methyltransferase family.

It carries out the reaction Endonucleolytic cleavage of DNA to give specific double-stranded fragments with terminal 5'-phosphates.. The catalysed reaction is a 2'-deoxyadenosine in DNA + S-adenosyl-L-methionine = an N(6)-methyl-2'-deoxyadenosine in DNA + S-adenosyl-L-homocysteine + H(+). In terms of biological role, probably a G subtype restriction enzyme that recognizes an undetermined sequence and cleaves at an undetermined site. Probably also acts as an alpha subtype methylase, presumably on the same sequence. The chain is Putative type II restriction enzyme and methyltransferase RM.MjaORFECS2P from Methanocaldococcus jannaschii (strain ATCC 43067 / DSM 2661 / JAL-1 / JCM 10045 / NBRC 100440) (Methanococcus jannaschii).